We begin with the raw amino-acid sequence, 209 residues long: MADRRKIGTKDKWKEKTWYTIVAPSFLGEREIALSPAADPSLMIGRKVEVPVSDFTGNFRKSSTMVIFRVKECTGKRCTTEFIGHKVSDDTIRRMVRRRKERIDIIMPSKTKDGYRLVIKIVLVSDSKLTANKRGEVRSKIIGFINERCGSMTLPELAQYIIGDNVYNDIVDTLKDVYPIKKIEIRKSEVLGRDGYVEEPGAQTQIEAQ.

The protein belongs to the eukaryotic ribosomal protein eS1 family.

This is Small ribosomal subunit protein eS1 from Picrophilus torridus (strain ATCC 700027 / DSM 9790 / JCM 10055 / NBRC 100828 / KAW 2/3).